We begin with the raw amino-acid sequence, 284 residues long: MSHRFSVLPQYLLPKQALTAFAGFVASRERGWITTEIIRRFVAKYQVNMEEAARSDIASYLTFNDFFTRALKPGVRPLADADLISPVDGAISQFGRIEHDQIFQAKGHHYSTTALVGGDAALAAQFQNGSFATLYLSPKDYHRIHMPCDGRLARMVHVPGELFSVNPVTARGVPGLFARNERVVCVFDSPRGPFVLILVGATIVGSMATVWHGVVNPPRGKQVRAWDYDPNAEAAVVLRRGEEMGRFLLGSTVVMLFPAGPLHFNPDWAPGRLIRLGEAMANYA.

Active-site charge relay system; for autoendoproteolytic cleavage activity residues include D88, H145, and S251. S251 serves as the catalytic Schiff-base intermediate with substrate; via pyruvic acid; for decarboxylase activity. A Pyruvic acid (Ser); by autocatalysis modification is found at S251.

The protein belongs to the phosphatidylserine decarboxylase family. PSD-B subfamily. Prokaryotic type I sub-subfamily. As to quaternary structure, heterodimer of a large membrane-associated beta subunit and a small pyruvoyl-containing alpha subunit. Requires pyruvate as cofactor. In terms of processing, is synthesized initially as an inactive proenzyme. Formation of the active enzyme involves a self-maturation process in which the active site pyruvoyl group is generated from an internal serine residue via an autocatalytic post-translational modification. Two non-identical subunits are generated from the proenzyme in this reaction, and the pyruvate is formed at the N-terminus of the alpha chain, which is derived from the carboxyl end of the proenzyme. The autoendoproteolytic cleavage occurs by a canonical serine protease mechanism, in which the side chain hydroxyl group of the serine supplies its oxygen atom to form the C-terminus of the beta chain, while the remainder of the serine residue undergoes an oxidative deamination to produce ammonia and the pyruvoyl prosthetic group on the alpha chain. During this reaction, the Ser that is part of the protease active site of the proenzyme becomes the pyruvoyl prosthetic group, which constitutes an essential element of the active site of the mature decarboxylase.

It localises to the cell membrane. It carries out the reaction a 1,2-diacyl-sn-glycero-3-phospho-L-serine + H(+) = a 1,2-diacyl-sn-glycero-3-phosphoethanolamine + CO2. It participates in phospholipid metabolism; phosphatidylethanolamine biosynthesis; phosphatidylethanolamine from CDP-diacylglycerol: step 2/2. Functionally, catalyzes the formation of phosphatidylethanolamine (PtdEtn) from phosphatidylserine (PtdSer). The polypeptide is Phosphatidylserine decarboxylase proenzyme (Polaromonas sp. (strain JS666 / ATCC BAA-500)).